A 724-amino-acid polypeptide reads, in one-letter code: Degenerin mec-10 (724 aa).

Residues 1–125 (MNRGPPNPRM…GQAPNSLYRA (125 aa)) are Cytoplasmic-facing. The helical transmembrane segment at 126 to 146 (VWVFLLLICAIQFINQAVAVI) threads the bilayer. Topologically, residues 147–684 (QKYQKMDKIT…FGGHLGLWSG (538 aa)) are extracellular. N-linked (GlcNAc...) asparagine glycans are attached at residues Asn294, Asn370, Asn463, Asn605, and Asn624. A helical membrane pass occupies residues 685-705 (VSVMTCCEFVCLVLELLYMAV). The Cytoplasmic segment spans residues 706–724 (THHITQERIRRRENAANEF).

Belongs to the amiloride-sensitive sodium channel (TC 1.A.6) family. In terms of assembly, the channel is probably composed of at least the mec-2, mec-4, mec-6 and mec-10 subunits.

The protein localises to the cell membrane. In terms of biological role, amiloride-sensitive sodium channel subunit required for mechanosensory transduction (touch sensitivity). Negatively regulates the turning step of male mating behavior. This Caenorhabditis briggsae protein is Degenerin mec-10.